We begin with the raw amino-acid sequence, 474 residues long: Glycogen synthase (474 aa).

ADP-alpha-D-glucose is bound at residue lysine 12.

It belongs to the glycosyltransferase 1 family. Bacterial/plant glycogen synthase subfamily.

The enzyme catalyses [(1-&gt;4)-alpha-D-glucosyl](n) + ADP-alpha-D-glucose = [(1-&gt;4)-alpha-D-glucosyl](n+1) + ADP + H(+). The protein operates within glycan biosynthesis; glycogen biosynthesis. Functionally, synthesizes alpha-1,4-glucan chains using ADP-glucose. This Xanthomonas axonopodis pv. citri (strain 306) protein is Glycogen synthase.